The following is a 123-amino-acid chain: Transmembrane protein 80 (123 aa).

4 helical membrane-spanning segments follow: residues 2 to 22 (LFHLSGLYSALYFLATLLMIV), 35 to 55 (LALDLVLLLLMGILKVAQLYL), 68 to 88 (LAASLAFTAVGGLLSVHFLLW), and 102 to 122 (VLLVLHGLEAGLQVVVIADFI).

Its subcellular location is the membrane. It is found in the cell projection. The protein localises to the cilium. This chain is Transmembrane protein 80 (Tmem80), found in Mus musculus (Mouse).